Here is a 473-residue protein sequence, read N- to C-terminus: Serine palmitoyltransferase 1 (473 aa).

The Lumenal portion of the chain corresponds to methionine 1–glutamine 15. Residues methionine 1–proline 66 are interaction with SPTLC2. The chain crosses the membrane as a helical span at residues alanine 16–isoleucine 36. Over arginine 37–leucine 473 the chain is Cytoplasmic. At tyrosine 164 the chain carries Phosphotyrosine; by ABL.

This sequence belongs to the class-II pyridoxal-phosphate-dependent aminotransferase family. In terms of assembly, component of the serine palmitoyltransferase (SPT) complex, which is also composed of SPTLC2 or SPTLC3 and SPTSSA or SPTSSB. The heterodimer with SPTLC2 or SPTLC3 forms the catalytic core of the enzyme, while SPTSSA or SPTSSB subunits determine substrate specificity. SPT also interacts with ORMDL proteins, especially ORMDL3, which negatively regulate SPT activity in the presence of ceramides. Forms dimers of heterodimers with SPTLC2. Interacts with RTN4 (isoform B). Requires pyridoxal 5'-phosphate as cofactor. Post-translationally, phosphorylation at Tyr-164 inhibits activity and promotes cell survival. As to expression, expressed in astrocytes.

The protein localises to the endoplasmic reticulum membrane. It catalyses the reaction L-serine + hexadecanoyl-CoA + H(+) = 3-oxosphinganine + CO2 + CoA. The enzyme catalyses octadecanoyl-CoA + L-serine + H(+) = 3-oxoeicosasphinganine + CO2 + CoA. The catalysed reaction is tetradecanoyl-CoA + L-serine + H(+) = 3-oxohexadecasphinganine + CO2 + CoA. It carries out the reaction dodecanoyl-CoA + L-serine + H(+) = 3-oxotetradecasphinganine + CO2 + CoA. The protein operates within lipid metabolism; sphingolipid metabolism. Its activity is regulated as follows. SPT complex catalytic activity is negatively regulated by ORMDL proteins, including ORMDL3, in the presence of ceramides. This mechanism allows to maintain ceramide levels at sufficient concentrations for the production of complex sphingolipids, but which prevents the accumulation of ceramides to levels that trigger apoptosis. In terms of biological role, component of the serine palmitoyltransferase multisubunit enzyme (SPT) that catalyzes the initial and rate-limiting step in sphingolipid biosynthesis by condensing L-serine and activated acyl-CoA (most commonly palmitoyl-CoA) to form long-chain bases. The SPT complex is also composed of SPTLC2 or SPTLC3 and SPTSSA or SPTSSB. Within this complex, the heterodimer with SPTLC2 or SPTLC3 forms the catalytic core. The composition of the serine palmitoyltransferase (SPT) complex determines the substrate preference. The SPTLC1-SPTLC2-SPTSSA complex shows a strong preference for C16-CoA substrate, while the SPTLC1-SPTLC3-SPTSSA isozyme uses both C14-CoA and C16-CoA as substrates, with a slight preference for C14-CoA. The SPTLC1-SPTLC2-SPTSSB complex shows a strong preference for C18-CoA substrate, while the SPTLC1-SPTLC3-SPTSSB isozyme displays an ability to use a broader range of acyl-CoAs, without apparent preference. Required for adipocyte cell viability and metabolic homeostasis. The chain is Serine palmitoyltransferase 1 from Rattus norvegicus (Rat).